The following is an 853-amino-acid chain: DNA mismatch repair protein MutS (853 aa).

Position 614–621 (614–621 (GPNMGGKS)) interacts with ATP.

The protein belongs to the DNA mismatch repair MutS family.

This protein is involved in the repair of mismatches in DNA. It is possible that it carries out the mismatch recognition step. This protein has a weak ATPase activity. This is DNA mismatch repair protein MutS from Escherichia coli O81 (strain ED1a).